An 807-amino-acid chain; its full sequence is Leucine--tRNA ligase (807 aa).

The short motif at 40 to 51 (PYPSGTGLHVGH) is the 'HIGH' region element. The 'KMSKS' region motif lies at 576–580 (KMSKS). An ATP-binding site is contributed by K579.

Belongs to the class-I aminoacyl-tRNA synthetase family.

It is found in the cytoplasm. It catalyses the reaction tRNA(Leu) + L-leucine + ATP = L-leucyl-tRNA(Leu) + AMP + diphosphate. This Pelodictyon phaeoclathratiforme (strain DSM 5477 / BU-1) protein is Leucine--tRNA ligase.